Reading from the N-terminus, the 241-residue chain is 1-(5-phosphoribosyl)-5-[(5-phosphoribosylamino)methylideneamino] imidazole-4-carboxamide isomerase (241 aa).

Asp8 functions as the Proton acceptor in the catalytic mechanism. Asp130 functions as the Proton donor in the catalytic mechanism.

This sequence belongs to the HisA/HisF family.

The protein localises to the cytoplasm. It carries out the reaction 1-(5-phospho-beta-D-ribosyl)-5-[(5-phospho-beta-D-ribosylamino)methylideneamino]imidazole-4-carboxamide = 5-[(5-phospho-1-deoxy-D-ribulos-1-ylimino)methylamino]-1-(5-phospho-beta-D-ribosyl)imidazole-4-carboxamide. It participates in amino-acid biosynthesis; L-histidine biosynthesis; L-histidine from 5-phospho-alpha-D-ribose 1-diphosphate: step 4/9. The polypeptide is 1-(5-phosphoribosyl)-5-[(5-phosphoribosylamino)methylideneamino] imidazole-4-carboxamide isomerase (Leptospira interrogans serogroup Icterohaemorrhagiae serovar copenhageni (strain Fiocruz L1-130)).